The primary structure comprises 360 residues: MKALILVGGYGTRLRPLTLSTPKPLVDFCNKPILLHQVEALAAAGVDHVILAVSYMSQMLEKEMKAQEQRLGIRISMSHEEEPLGTAGPLALARDLLSETADPFFVLNSDVICDFPFQAMVQFHRHHGQEGSILVTKVEEPSKYGVVVCEADTGRIHRFVEKPQVFVSNKINAGMYILSPAVLQRIQLKPTSIEKEIFPVMAKEGQLYAMELQGFWMDIGQPKDFLTGMCLFLQSLRQKHPERLYSGPGIVGNVLVDPSARIGQNCSIGPNVSLGPGVVVEDGVCIRRCTVLRDAHIRSHSWLESCIVGWRCRVGQWVRMENVTVLGEDVIVNDELYLNGASVLPHKSIGESVPEPRIIM.

Residues 2–222 (KALILVGGYG…QGFWMDIGQP (221 aa)) form a substrate-binding domain region. Aspartate 110 is a GDP-alpha-D-mannose binding site. Residue aspartate 110 participates in Mg(2+) binding. The active site involves lysine 162. Position 218 (aspartate 218) interacts with GDP-alpha-D-mannose. Positions 245–360 (YSGPGIVGNV…ESVPEPRIIM (116 aa)) are hexapeptide repeat domain.

This sequence belongs to the transferase hexapeptide repeat family. As to quaternary structure, component of the GMPPA-GMPPB mannose-1-phosphate guanylyltransferase complex composed of 4 GMPPA subunits and 8 GMPPB subunits; the complex is organized into three layers, a central layer made up of 2 GMPPA dimers sandwiched between two layers each made up of 2 GMPPB dimers. GMPPB catalytic activity is reduced when part of the complex and binding of GDP-alpha-D-Mannose by GMPPA induces allosteric feedback inhibition of GMPPB. Mg(2+) is required as a cofactor.

Its subcellular location is the cytoplasm. It catalyses the reaction alpha-D-mannose 1-phosphate + GTP + H(+) = GDP-alpha-D-mannose + diphosphate. Its pathway is nucleotide-sugar biosynthesis; GDP-alpha-D-mannose biosynthesis; GDP-alpha-D-mannose from alpha-D-mannose 1-phosphate (GTP route): step 1/1. Enzyme activity is reduced by incorporation into the GMPPA-GMPPB mannose-1-phosphate guanylyltransferase complex. Allosterically inhibited, when part of the GMPPA-GMPPB complex, by GDP-alpha-D-mannose binding to GMPPA. Catalytic subunit of the GMPPA-GMPPB mannose-1-phosphate guanylyltransferase complex. Catalyzes the formation of GDP-mannose, an essential precursor of glycan moieties of glycoproteins and glycolipids. Can catalyze the reverse reaction in vitro. Together with GMPPA regulates GDP-alpha-D-mannose levels. The protein is Mannose-1-phosphate guanylyltransferase catalytic subunit beta of Mus musculus (Mouse).